Here is a 206-residue protein sequence, read N- to C-terminus: Large ribosomal subunit protein uL3 (206 aa).

It belongs to the universal ribosomal protein uL3 family. Part of the 50S ribosomal subunit. Forms a cluster with proteins L14 and L19.

In terms of biological role, one of the primary rRNA binding proteins, it binds directly near the 3'-end of the 23S rRNA, where it nucleates assembly of the 50S subunit. This Thermus thermophilus (strain ATCC BAA-163 / DSM 7039 / HB27) protein is Large ribosomal subunit protein uL3.